The sequence spans 71 residues: Long neurotoxin 1 (71 aa).

5 disulfide bridges follow: C3–C20, C14–C41, C26–C30, C45–C56, and C57–C62.

It belongs to the three-finger toxin family. Long-chain subfamily. Type II alpha-neurotoxin sub-subfamily. As to expression, expressed by the venom gland.

It localises to the secreted. Functionally, binds with high affinity to muscular (alpha-1/CHRNA1) and neuronal (alpha-7/CHRNA7) nicotinic acetylcholine receptor (nAChR) and hinders acetylcholine binding to the receptor, thereby impairing neuromuscular and neuronal transmission. This is Long neurotoxin 1 from Naja annulata annulata (Banded water cobra).